The sequence spans 523 residues: MASYNLRSQVRLIAITIVIIITLSTPITTNTSPQPWNILSHNEFAGKLTSSSSSVESAATDFGHVTKIFPSAVLIPSSVEDITDLIKLSFDSQLSFPLAARGHGHSHRGQASAKDGVVVNMRSMVNRDRGIKVSRTCLYVDVDAAWLWIEVLNKTLELGLTPVSWTDYLYLTVGGTLSNGGISGQTFRYGPQITNVLEMDVITGKGEIATCSKDMNSDLFFAVLGGLGQFGIITRARIKLEVAPKRAKWLRFLYIDFSEFTRDQERVISKTDGVDFLEGSIMVDHGPPDNWRSTYYPPSDHLRIASMVKRHRVIYCLEVVKYYDETSQYTVNEEMEELSDSLNHVRGFMYEKDVTYMDFLNRVRTGELNLKSKGQWDVPHPWLNLFVPKTQISKFDDGVFKGIILRNNITSGPVLVYPMNRNKWNDRMSAAIPEEDVFYAVGFLRSAGFDNWEAFDQENMEILKFCEDANMGVIQYLPYHSSQEGWVRHFGPRWNIFVERKYKYDPKMILSPGQNIFQKINSS.

An N-terminal signal peptide occupies residues 1 to 31 (MASYNLRSQVRLIAITIVIIITLSTPITTNT). Positions 66–243 (TKIFPSAVLI…TRARIKLEVA (178 aa)) constitute an FAD-binding PCMH-type domain. Residues A100, G102, and G104 each contribute to the FAD site. H105 carries the pros-8alpha-FAD histidine modification. FAD is bound by residues S106 and Q110. N-linked (GlcNAc...) asparagine glycosylation is present at N153. Positions 167, 172, 178, 182, and 233 each coordinate FAD. A glycan (N-linked (GlcNAc...) asparagine) is linked at N408. Positions 476, 511, and 514 each coordinate FAD.

This sequence belongs to the oxygen-dependent FAD-linked oxidoreductase family. FAD serves as cofactor. In terms of tissue distribution, very weak expression in the young shoot tissues around two weeks after germination. Present in the center of the floral meristem and the boundary between long stamen primordia and gynoecial primordia.

Its subcellular location is the endoplasmic reticulum. The protein resides in the vacuole. It carries out the reaction N(6)-dimethylallyladenine + A + H2O = 3-methyl-2-butenal + adenine + AH2. In terms of biological role, catalyzes the oxidation of cytokinins, a family of N(6)-substituted adenine derivatives that are plant hormones, where the substituent is an isopentenyl group. Catalyzes in vitro the oxidation of various types of cytokinin nucleotides that are known as direct products of cytokinin biosynthesis. In association with CKX5 regulates the activity of the reproductive meristems, flower organ size and ovule formation. This Arabidopsis thaliana (Mouse-ear cress) protein is Cytokinin dehydrogenase 3 (CKX3).